We begin with the raw amino-acid sequence, 830 residues long: ATP-dependent DNA helicase chl-1 (830 aa).

A Helicase ATP-binding domain is found at 1–403 (MDEFSFPFQP…HNLLYMKQLE (403 aa)). ATP is bound at residue 35 to 42 (SPTGTGKS). Basic and acidic residues-rich tracts occupy residues 124–140 (GMVE…RDTD) and 157–168 (NDEKSEKQRDSD). The disordered stretch occupies residues 124–173 (GMVEVSRKRKAPARDTDQFLEPQDEAAPSEEYNNDEKSEKQRDSDFFDDV). [4Fe-4S] cluster is bound by residues Cys-222, Cys-240, Cys-272, and Cys-308. A DEAH box motif is present at residues 351-354 (DEAH).

Belongs to the DEAD box helicase family. DEAH subfamily. DDX11/CHL1 sub-subfamily. [4Fe-4S] cluster is required as a cofactor.

It is found in the nucleus. It catalyses the reaction Couples ATP hydrolysis with the unwinding of duplex DNA at the replication fork by translocating in the 5'-3' direction. This creates two antiparallel DNA single strands (ssDNA). The leading ssDNA polymer is the template for DNA polymerase III holoenzyme which synthesizes a continuous strand.. The enzyme catalyses ATP + H2O = ADP + phosphate + H(+). Required for normal cell proliferation and chromosome stability. Plays a role in DNA repair during replication. The protein is ATP-dependent DNA helicase chl-1 of Caenorhabditis elegans.